We begin with the raw amino-acid sequence, 202 residues long: LexA repressor (202 aa).

A DNA-binding region (H-T-H motif) is located at residues 28–48; the sequence is RAEIAQQLGFRSPNAAEEHLK. Residues serine 119 and lysine 156 each act as for autocatalytic cleavage activity in the active site.

Belongs to the peptidase S24 family. Homodimer.

The catalysed reaction is Hydrolysis of Ala-|-Gly bond in repressor LexA.. In terms of biological role, represses a number of genes involved in the response to DNA damage (SOS response), including recA and lexA. In the presence of single-stranded DNA, RecA interacts with LexA causing an autocatalytic cleavage which disrupts the DNA-binding part of LexA, leading to derepression of the SOS regulon and eventually DNA repair. The sequence is that of LexA repressor from Pectobacterium atrosepticum (strain SCRI 1043 / ATCC BAA-672) (Erwinia carotovora subsp. atroseptica).